The primary structure comprises 81 residues: ATP synthase subunit c, chloroplastic (81 aa).

2 helical membrane-spanning segments follow: residues 3–23 (PIIS…ASIG) and 57–77 (LAFM…LLFA).

The protein belongs to the ATPase C chain family. F-type ATPases have 2 components, F(1) - the catalytic core - and F(0) - the membrane proton channel. F(1) has five subunits: alpha(3), beta(3), gamma(1), delta(1), epsilon(1). F(0) has four main subunits: a(1), b(1), b'(1) and c(10-14). The alpha and beta chains form an alternating ring which encloses part of the gamma chain. F(1) is attached to F(0) by a central stalk formed by the gamma and epsilon chains, while a peripheral stalk is formed by the delta, b and b' chains.

The protein resides in the plastid. It localises to the chloroplast thylakoid membrane. Its function is as follows. F(1)F(0) ATP synthase produces ATP from ADP in the presence of a proton or sodium gradient. F-type ATPases consist of two structural domains, F(1) containing the extramembraneous catalytic core and F(0) containing the membrane proton channel, linked together by a central stalk and a peripheral stalk. During catalysis, ATP synthesis in the catalytic domain of F(1) is coupled via a rotary mechanism of the central stalk subunits to proton translocation. Key component of the F(0) channel; it plays a direct role in translocation across the membrane. A homomeric c-ring of between 10-14 subunits forms the central stalk rotor element with the F(1) delta and epsilon subunits. The chain is ATP synthase subunit c, chloroplastic from Phaseolus vulgaris (Kidney bean).